A 133-amino-acid chain; its full sequence is uncharacterized protein (133 aa).

The chain crosses the membrane as a helical span at residues 91 to 113 (LFATALISCIPSSFSALSFLATL).

It is found in the membrane. This is an uncharacterized protein from Saccharomyces cerevisiae (strain ATCC 204508 / S288c) (Baker's yeast).